The sequence spans 71 residues: Large ribosomal subunit protein bL31 (71 aa).

Zn(2+) is bound by residues cysteine 16, cysteine 18, cysteine 38, and cysteine 41.

Belongs to the bacterial ribosomal protein bL31 family. Type A subfamily. Part of the 50S ribosomal subunit. The cofactor is Zn(2+).

Binds the 23S rRNA. The chain is Large ribosomal subunit protein bL31 from Neisseria meningitidis serogroup A / serotype 4A (strain DSM 15465 / Z2491).